The primary structure comprises 399 residues: Digeranylgeranylglycerophospholipid reductase (399 aa).

FAD contacts are provided by Gly-15, Glu-34, Cys-45, Ala-46, Gly-48, Arg-99, Ala-123, Asp-280, Gly-292, and Ile-293.

The protein belongs to the geranylgeranyl reductase family. DGGGPL reductase subfamily. FAD is required as a cofactor.

The catalysed reaction is a 2,3-bis-O-phytanyl-sn-glycerol 1-phospholipid + 8 oxidized 2[4Fe-4S]-[ferredoxin] = a 2,3-bis-O-(geranylgeranyl)-sn-glycerol 1-phospholipid + 8 reduced 2[4Fe-4S]-[ferredoxin] + 16 H(+). The enzyme catalyses 2,3-bis-O-(phytanyl)-sn-glycerol 1-phosphate + 8 oxidized 2[4Fe-4S]-[ferredoxin] = 2,3-bis-O-(geranylgeranyl)-sn-glycerol 1-phosphate + 8 reduced 2[4Fe-4S]-[ferredoxin] + 16 H(+). It catalyses the reaction a 2,3-bis-O-phytanyl-sn-glycerol 1-phospholipid + 8 A = a 2,3-bis-O-(geranylgeranyl)-sn-glycerol 1-phospholipid + 8 AH2. It carries out the reaction CDP-2,3-bis-O-(geranylgeranyl)-sn-glycerol + 8 AH2 = CDP-2,3-bis-O-(phytanyl)-sn-glycerol + 8 A. The catalysed reaction is archaetidylserine + 8 AH2 = 2,3-bis-O-phytanyl-sn-glycero-3-phospho-L-serine + 8 A. The protein operates within membrane lipid metabolism; glycerophospholipid metabolism. Is involved in the reduction of 2,3-digeranylgeranylglycerophospholipids (unsaturated archaeols) into 2,3-diphytanylglycerophospholipids (saturated archaeols) in the biosynthesis of archaeal membrane lipids. Catalyzes the formation of archaetidic acid (2,3-di-O-phytanyl-sn-glyceryl phosphate) from 2,3-di-O-geranylgeranylglyceryl phosphate (DGGGP) via the hydrogenation of each double bond of the isoprenoid chains. Is also probably able to reduce double bonds of geranyl groups in CDP-2,3-bis-O-(geranylgeranyl)-sn-glycerol and archaetidylserine, thus acting at various stages in the biosynthesis of archaeal membrane lipids. The protein is Digeranylgeranylglycerophospholipid reductase of Methanosphaerula palustris (strain ATCC BAA-1556 / DSM 19958 / E1-9c).